Reading from the N-terminus, the 293-residue chain is Undecaprenyl-diphosphatase (293 aa).

The next 5 helical transmembrane spans lie at W107–I127, M134–V154, F207–A227, I243–V263, and F268–L288.

The protein belongs to the UppP family.

It is found in the cell membrane. It catalyses the reaction di-trans,octa-cis-undecaprenyl diphosphate + H2O = di-trans,octa-cis-undecaprenyl phosphate + phosphate + H(+). Functionally, catalyzes the dephosphorylation of undecaprenyl diphosphate (UPP). Confers resistance to bacitracin. The protein is Undecaprenyl-diphosphatase of Corynebacterium efficiens (strain DSM 44549 / YS-314 / AJ 12310 / JCM 11189 / NBRC 100395).